Here is a 90-residue protein sequence, read N- to C-terminus: Probable Fe(2+)-trafficking protein (90 aa).

The protein belongs to the Fe(2+)-trafficking protein family.

Could be a mediator in iron transactions between iron acquisition and iron-requiring processes, such as synthesis and/or repair of Fe-S clusters in biosynthetic enzymes. The sequence is that of Probable Fe(2+)-trafficking protein from Saccharophagus degradans (strain 2-40 / ATCC 43961 / DSM 17024).